The following is a 469-amino-acid chain: Diaminopimelate decarboxylase (469 aa).

The interval 1 to 23 (MLSTEMPLPTTGSTLLKTPASPS) is disordered. At Lys93 the chain carries N6-(pyridoxal phosphate)lysine. Pyridoxal 5'-phosphate is bound by residues Gly279 and 321 to 324 (EPGR). 3 residues coordinate substrate: Arg324, Arg361, and Tyr365. The active-site Proton donor is Cys392. Substrate contacts are provided by Glu393 and Tyr421. Pyridoxal 5'-phosphate is bound at residue Tyr421.

The protein belongs to the Orn/Lys/Arg decarboxylase class-II family. LysA subfamily. In terms of assembly, homodimer. Pyridoxal 5'-phosphate is required as a cofactor.

The enzyme catalyses meso-2,6-diaminopimelate + H(+) = L-lysine + CO2. It functions in the pathway amino-acid biosynthesis; L-lysine biosynthesis via DAP pathway; L-lysine from DL-2,6-diaminopimelate: step 1/1. Specifically catalyzes the decarboxylation of meso-diaminopimelate (meso-DAP) to L-lysine. The polypeptide is Diaminopimelate decarboxylase (Synechocystis sp. (strain ATCC 27184 / PCC 6803 / Kazusa)).